A 708-amino-acid polypeptide reads, in one-letter code: C-Jun-amino-terminal kinase-interacting protein 1 (708 aa).

The disordered stretch occupies residues 1 to 26 (MAERESGLSGGAASPPAASPFLGLHI). Low complexity predominate over residues 11 to 24 (GAASPPAASPFLGL). A phosphoserine mark is found at S14, S28, and S39. Residues 69 to 368 (PPRAGLLSAG…PPRASLSSDT (300 aa)) form a disordered region. The segment covering 71 to 87 (RAGLLSAGSSGSAGSRL) has biased composition (low complexity). T103 carries the post-translational modification Phosphothreonine; by MAPK8, MAPK9 and MAPK10. Over residues 105 to 116 (GAEDDEEDDDEL) the composition is skewed to acidic residues. Positions 126–282 (SKAESGQEPA…EATEEIYLTP (157 aa)) are JNK-binding domain (JBD). S149 carries the post-translational modification Phosphoserine. The tract at residues 154–173 (RPKRPTTLNLFPQVPRSQDT) is minimal inhibitory domain (MID). The span at 159–179 (TTLNLFPQVPRSQDTLNNNSL) shows a compositional bias: polar residues. S178, S184, S190, S192, and S193 each carry phosphoserine. The segment covering 191 to 201 (RSSSPLKTGEQ) has biased composition (polar residues). T202 carries the post-translational modification Phosphothreonine; by MAPK8, MAPK9 and MAPK10. S211 carries the post-translational modification Phosphoserine. A compositionally biased stretch (polar residues) spans 220–232 (PVPTQDRGTSTDS). Positions 264 to 274 (IHYQADVRLEA) are enriched in basic and acidic residues. The tract at residues 280–468 (LTPVQRPPDP…NVFMSGRSRS (189 aa)) is interaction with MAP3K7. A compositionally biased stretch (polar residues) spans 292–308 (PTSTFLPPTESRMSVSS). Phosphoserine is present on residues S308, S325, S327, S337, S352, S363, S366, S404, and S406. 2 short sequence motifs (D-box) span residues 350–357 (RGSLGEPP) and 361–369 (RASLSSDTS). Position 408 is a phosphothreonine (T408). The disordered stretch occupies residues 426-448 (EEYEEAPQPRPPTCLSEDSTPDE). Phosphoserine occurs at positions 441 and 444. Residue T445 is modified to Phosphothreonine. 4 positions are modified to phosphoserine: S466, S468, S469, and S470. The interaction with VRK2 stretch occupies residues 468-657 (SSSAESFGLF…PKNNKYFGFI (190 aa)). The SH3 domain occupies 485–546 (EHEQTHRAIF…PAYYAIEVTK (62 aa)). The PID domain maps to 558 to 697 (SDWIDQFRVK…FQQFYKQFVE (140 aa)).

The protein belongs to the JIP scaffold family. As to quaternary structure, forms homo- or heterooligomeric complexes. Binds specific components of the JNK signaling pathway namely MAPK8/JNK1, MAPK9/JNK2, MAPK10/JNK3, MAP2K7/MKK7, MAP3K11/MLK3 and DLK1. Also binds the proline-rich domain-containing splice variant of apolipoprotein E receptor 2 (ApoER2). Interacts, via the PID domain, with ARHGEF28. Binds the cytoplasmic tails of LRP1 and LRP2 (Megalin). Binds the TPR motif-containing C-terminal of kinesin light chain, KLC1. Pre-assembled MAPK8IP1 scaffolding complexes are then transported as a cargo of kinesin, to the required subcellular location. Interacts with the cytoplasmic domain of APP. Interacts with DCLK2, VRK2 and MAP3K7/TAK1. Found in a complex with SH3RF1, RAC1, MAP3K11/MLK3, MAP2K7/MKK7 and MAPK8/JNK1. Found in a complex with SH3RF1, RAC2, MAP3K7/TAK1, MAP2K7/MKK7, MAPK8/JNK1 and MAPK9/JNK2. Interacts with SH3RF2. Phosphorylated by MAPK8, MAPK9 and MAPK10. Phosphorylation on Thr-103 is also necessary for the dissociation and activation of MAP3K12. Phosphorylated by VRK2. Hyperphosphorylated during mitosis following activation of stress-activated and MAP kinases. Post-translationally, ubiquitinated. Two preliminary events are required to prime for ubiquitination; phosphorylation and an increased in intracellular calcium concentration. Then, the calcium influx initiates ubiquitination and degradation by the ubiquitin-proteasome pathway. Highly expressed in brain and pancreatic beta-cells. Weaker expression found in kidney.

Its subcellular location is the cytoplasm. The protein localises to the perinuclear region. The protein resides in the nucleus. It is found in the endoplasmic reticulum membrane. It localises to the mitochondrion membrane. Its function is as follows. The JNK-interacting protein (JIP) group of scaffold proteins selectively mediates JNK signaling by aggregating specific components of the MAPK cascade to form a functional JNK signaling module. Required for JNK activation in response to excitotoxic stress. Cytoplasmic MAPK8IP1 causes inhibition of JNK-regulated activity by retaining JNK in the cytoplasm and thus inhibiting the JNK phosphorylation of c-Jun. May also participate in ApoER2-specific reelin signaling. Directly, or indirectly, regulates GLUT2 gene expression and beta-cell function. Appears to have a role in cell signaling in mature and developing nerve terminals. May function as a regulator of vesicle transport, through interactions with the JNK-signaling components and motor proteins. Functions as an anti-apoptotic protein and whose level seems to influence the beta-cell death or survival response. Acts as a scaffold protein that coordinates with SH3RF1 in organizing different components of the JNK pathway, including RAC1 or RAC2, MAP3K11/MLK3 or MAP3K7/TAK1, MAP2K7/MKK7, MAPK8/JNK1 and/or MAPK9/JNK2 into a functional multiprotein complex to ensure the effective activation of the JNK signaling pathway. Regulates the activation of MAPK8/JNK1 and differentiation of CD8(+) T-cells. The protein is C-Jun-amino-terminal kinase-interacting protein 1 (Mapk8ip1) of Rattus norvegicus (Rat).